The primary structure comprises 189 residues: MSDSSKEKKKKFADMVSRQKGDDQQSDNHKQTDDLNEDLNTLKERAVQLEDHLRRAVADNENVKRIMQKQISDASDYAVTKLARDMIDSCDNLKRVMEILKDGDPVHEGIKVAYQKIINDLKKHGIKEVDPLGELFDSNLHQAVVEREDNEKEPGTIVEVLQTGYTIKNRLLRPAMVILSKKSADCGND.

Residues 1–37 (MSDSSKEKKKKFADMVSRQKGDDQQSDNHKQTDDLNE) are disordered. Residues 17–33 (SRQKGDDQQSDNHKQTD) show a composition bias toward basic and acidic residues.

Belongs to the GrpE family. As to quaternary structure, homodimer.

The protein localises to the cytoplasm. Its function is as follows. Participates actively in the response to hyperosmotic and heat shock by preventing the aggregation of stress-denatured proteins, in association with DnaK and GrpE. It is the nucleotide exchange factor for DnaK and may function as a thermosensor. Unfolded proteins bind initially to DnaJ; upon interaction with the DnaJ-bound protein, DnaK hydrolyzes its bound ATP, resulting in the formation of a stable complex. GrpE releases ADP from DnaK; ATP binding to DnaK triggers the release of the substrate protein, thus completing the reaction cycle. Several rounds of ATP-dependent interactions between DnaJ, DnaK and GrpE are required for fully efficient folding. The chain is Protein GrpE from Wolbachia pipientis wMel.